The sequence spans 91 residues: Small ribosomal subunit protein bS16c (91 aa).

Belongs to the bacterial ribosomal protein bS16 family.

It localises to the plastid. The protein resides in the chloroplast. The sequence is that of Small ribosomal subunit protein bS16c from Pelargonium hortorum (Common geranium).